The sequence spans 398 residues: Bifunctional enzyme IspD/IspF (398 aa).

Residues 1 to 234 are 2-C-methyl-D-erythritol 4-phosphate cytidylyltransferase; sequence MANSRRTAAI…SRLAALLGDI (234 aa). A 2-C-methyl-D-erythritol 2,4-cyclodiphosphate synthase region spans residues 235–398; it reads RTGTGYDVHA…LPWGPNGLSG (164 aa). A divalent metal cation is bound by residues D241 and H243. 4-CDP-2-C-methyl-D-erythritol 2-phosphate-binding positions include 241–243 and 267–268; these read DVH and HS. Residue H275 coordinates a divalent metal cation. 4-CDP-2-C-methyl-D-erythritol 2-phosphate-binding positions include 289–291, 365–368, F372, and R375; these read DIG and TTSE.

It in the N-terminal section; belongs to the IspD/TarI cytidylyltransferase family. IspD subfamily. This sequence in the C-terminal section; belongs to the IspF family. The cofactor is a divalent metal cation.

The catalysed reaction is 2-C-methyl-D-erythritol 4-phosphate + CTP + H(+) = 4-CDP-2-C-methyl-D-erythritol + diphosphate. The enzyme catalyses 4-CDP-2-C-methyl-D-erythritol 2-phosphate = 2-C-methyl-D-erythritol 2,4-cyclic diphosphate + CMP. It participates in isoprenoid biosynthesis; isopentenyl diphosphate biosynthesis via DXP pathway; isopentenyl diphosphate from 1-deoxy-D-xylulose 5-phosphate: step 2/6. Its pathway is isoprenoid biosynthesis; isopentenyl diphosphate biosynthesis via DXP pathway; isopentenyl diphosphate from 1-deoxy-D-xylulose 5-phosphate: step 4/6. Bifunctional enzyme that catalyzes the formation of 4-diphosphocytidyl-2-C-methyl-D-erythritol from CTP and 2-C-methyl-D-erythritol 4-phosphate (MEP) (IspD), and catalyzes the conversion of 4-diphosphocytidyl-2-C-methyl-D-erythritol 2-phosphate (CDP-ME2P) to 2-C-methyl-D-erythritol 2,4-cyclodiphosphate (ME-CPP) with a corresponding release of cytidine 5-monophosphate (CMP) (IspF). This Rhodopseudomonas palustris (strain BisA53) protein is Bifunctional enzyme IspD/IspF.